We begin with the raw amino-acid sequence, 584 residues long: Eukaryotic translation initiation factor 3 subunit D (584 aa).

Residues 118 to 184 are disordered; sequence IFTRGRGQRG…KDYDKPQRNR (67 aa). Residues 127-167 show a composition bias toward gly residues; that stretch reads GRGGQDTRGGGRQQFQRGGRGGQQYGGGGYSDRGGGRGGGA. Positions 173-184 are enriched in basic and acidic residues; the sequence is GWKDYDKPQRNR. Residues 312-326 are RNA gate; sequence ALDMVTVNENAADAP. The tract at residues 563–584 is disordered; the sequence is PANGLDDDDEGPEPEGVAEEED. Acidic residues predominate over residues 567–584; that stretch reads LDDDDEGPEPEGVAEEED.

The protein belongs to the eIF-3 subunit D family. Component of the eukaryotic translation initiation factor 3 (eIF-3) complex.

It is found in the cytoplasm. MRNA cap-binding component of the eukaryotic translation initiation factor 3 (eIF-3) complex, which is involved in protein synthesis of a specialized repertoire of mRNAs and, together with other initiation factors, stimulates binding of mRNA and methionyl-tRNAi to the 40S ribosome. The eIF-3 complex specifically targets and initiates translation of a subset of mRNAs involved in cell proliferation. In the eIF-3 complex, eif3d specifically recognizes and binds the 7-methylguanosine cap of a subset of mRNAs. In Chaetomium globosum (strain ATCC 6205 / CBS 148.51 / DSM 1962 / NBRC 6347 / NRRL 1970) (Soil fungus), this protein is Eukaryotic translation initiation factor 3 subunit D.